The chain runs to 153 residues: Biogenesis of lysosome-related organelles complex 1 subunit 1 (153 aa).

Residues 1–11 (MAPGSRGERSS) show a composition bias toward basic and acidic residues. A disordered region spans residues 1 to 27 (MAPGSRGERSSFRSRRGPGVPSPQPDV). The stretch at 27–59 (VTMLSRLLKEHQAKQNERKELQEKRRREAITAA) forms a coiled coil.

Belongs to the BLOC1S1 family. As to quaternary structure, component of the biogenesis of lysosome-related organelles complex 1 (BLOC-1) composed of BLOC1S1, BLOC1S2, BLOC1S3, BLOC1S4, BLOC1S5, BLOC1S6, DTNBP1/BLOC1S7 and SNAPIN/BLOC1S8. Octamer composed of one copy each BLOC1S1, BLOC1S2, BLOC1S3, BLOC1S4, BLOC1S5, BLOC1S6, DTNBP1/BLOC1S7 and SNAPIN/BLOC1S8. The BLOC-1 complex associates with the AP-3 protein complex and membrane protein cargos. Component of the BLOC-one-related complex (BORC) which is composed of BLOC1S1, BLOC1S2, BORCS5, BORCS6, BORCS7, BORCS8, KXD1 and SNAPIN. Interacts with ATP5F1A and NDUFA9; involved in their acetylation on lysine residues. Interacts with KXD1.

The protein localises to the mitochondrion intermembrane space. The protein resides in the mitochondrion matrix. Its subcellular location is the cytoplasm. It is found in the cytosol. It localises to the lysosome membrane. It catalyses the reaction L-lysyl-[protein] + acetyl-CoA = N(6)-acetyl-L-lysyl-[protein] + CoA + H(+). Component of the BLOC-1 complex, a complex that is required for normal biogenesis of lysosome-related organelles (LRO), such as platelet dense granules and melanosomes. In concert with the AP-3 complex, the BLOC-1 complex is required to target membrane protein cargos into vesicles assembled at cell bodies for delivery into neurites and nerve terminals. The BLOC-1 complex, in association with SNARE proteins, is also proposed to be involved in neurite extension. As part of the BORC complex may play a role in lysosomes movement and localization at the cell periphery. Associated with the cytosolic face of lysosomes, the BORC complex may recruit ARL8B and couple lysosomes to microtubule plus-end-directed kinesin motor. Functionally, acts as a protein acetyltransferase. Negatively regulates aerobic respiration through mitochondrial protein lysine-acetylation. May counteract the action of the deacetylase SIRT3 by acetylating and regulating proteins of the mitochondrial respiratory chain including ATP5F1A and NDUFA9. Acts as a regulator of mTORC2 signaling in response to hypotoxic stress by mediating acetylation of RICTOR, thereby protecting RICTOR against ubiquitination and subsequent degradation by the proteasome. This Homo sapiens (Human) protein is Biogenesis of lysosome-related organelles complex 1 subunit 1 (BLOC1S1).